A 572-amino-acid polypeptide reads, in one-letter code: Pentatricopeptide repeat-containing protein At5g15010, mitochondrial (572 aa).

The transit peptide at 1–57 (MRGIFLIRSRLSIFRAPAVKCLRFSNVLPSLSNNCIVRLYMEPPVACVLPLGLCSMF) directs the protein to the mitochondrion. 10 PPR repeats span residues 160-194 (SVRE…SPSL), 196-230 (NSQT…KLEM), 231-261 (GIDD…NKDK), 265-300 (DAKS…GVKH), 301-335 (DVVS…CIEP), 336-371 (DRKV…GIEP), 372-406 (NVVT…GLFP), 412-438 (HAFM…GCEP), 439-473 (TVET…TVGP), and 474-508 (DLSS…GMRP).

Belongs to the PPR family. P subfamily.

Its subcellular location is the mitochondrion. The sequence is that of Pentatricopeptide repeat-containing protein At5g15010, mitochondrial from Arabidopsis thaliana (Mouse-ear cress).